A 146-amino-acid polypeptide reads, in one-letter code: Large ribosomal subunit protein uL15 (146 aa).

A disordered region spans residues methionine 1–glycine 54. Residues arginine 23–valine 37 are compositionally biased toward gly residues.

Belongs to the universal ribosomal protein uL15 family. Part of the 50S ribosomal subunit.

Its function is as follows. Binds to the 23S rRNA. This Acinetobacter baylyi (strain ATCC 33305 / BD413 / ADP1) protein is Large ribosomal subunit protein uL15.